A 305-amino-acid polypeptide reads, in one-letter code: N-acetylmuramic acid 6-phosphate etherase (305 aa).

In terms of domain architecture, SIS spans 59-222 (TSKALGKGGR…STGVMVKLGK (164 aa)). The Proton donor role is filled by Glu87. The active site involves Glu118.

The protein belongs to the GCKR-like family. MurNAc-6-P etherase subfamily. In terms of assembly, homodimer.

The enzyme catalyses N-acetyl-D-muramate 6-phosphate + H2O = N-acetyl-D-glucosamine 6-phosphate + (R)-lactate. It participates in amino-sugar metabolism; N-acetylmuramate degradation. Functionally, specifically catalyzes the cleavage of the D-lactyl ether substituent of MurNAc 6-phosphate, producing GlcNAc 6-phosphate and D-lactate. The chain is N-acetylmuramic acid 6-phosphate etherase from Crocosphaera subtropica (strain ATCC 51142 / BH68) (Cyanothece sp. (strain ATCC 51142)).